Consider the following 261-residue polypeptide: Anamorsin homolog (261 aa).

Positions 4 to 134 (VQENNQVLYI…EIGSAAKLSL (131 aa)) are N-terminal SAM-like domain. Residues 134-173 (LGGGANKAKVAAVWKLDVDDDGEAEERIDEDELLDEEDKV) form a linker region. The [2Fe-2S] cluster site is built by Cys-183, Cys-192, Cys-195, and Cys-197. Positions 183-197 (CGTTGKRKACKDCSC) are fe-S binding site A. [4Fe-4S] cluster is bound by residues Cys-222, Cys-225, Cys-233, and Cys-236. 2 short sequence motifs (cx2C motif) span residues 222–225 (CGSC) and 233–236 (CATC). Residues 222 to 236 (CGSCYLGDAFRCATC) are fe-S binding site B.

The protein belongs to the anamorsin family. Monomer. Requires [2Fe-2S] cluster as cofactor. The cofactor is [4Fe-4S] cluster.

Its subcellular location is the cytoplasm. The protein resides in the mitochondrion intermembrane space. Component of the cytosolic iron-sulfur (Fe-S) protein assembly (CIA) machinery. Required for the maturation of extramitochondrial Fe-S proteins. Part of an electron transfer chain functioning in an early step of cytosolic Fe-S biogenesis, facilitating the de novo assembly of a [4Fe-4S] cluster on the cytosolic Fe-S scaffold complex. Electrons are transferred from NADPH via a FAD- and FMN-containing diflavin oxidoreductase. Together with the diflavin oxidoreductase, also required for the assembly of the diferric tyrosyl radical cofactor of ribonucleotide reductase (RNR), probably by providing electrons for reduction during radical cofactor maturation in the catalytic small subunit. This is Anamorsin homolog from Culex quinquefasciatus (Southern house mosquito).